Here is a 115-residue protein sequence, read N- to C-terminus: NAD(P)H-quinone oxidoreductase subunit M (115 aa).

It belongs to the complex I NdhM subunit family. As to quaternary structure, NDH-1 can be composed of about 15 different subunits; different subcomplexes with different compositions have been identified which probably have different functions.

It localises to the cellular thylakoid membrane. The catalysed reaction is a plastoquinone + NADH + (n+1) H(+)(in) = a plastoquinol + NAD(+) + n H(+)(out). It catalyses the reaction a plastoquinone + NADPH + (n+1) H(+)(in) = a plastoquinol + NADP(+) + n H(+)(out). Its function is as follows. NDH-1 shuttles electrons from an unknown electron donor, via FMN and iron-sulfur (Fe-S) centers, to quinones in the respiratory and/or the photosynthetic chain. The immediate electron acceptor for the enzyme in this species is believed to be plastoquinone. Couples the redox reaction to proton translocation, and thus conserves the redox energy in a proton gradient. Cyanobacterial NDH-1 also plays a role in inorganic carbon-concentration. This is NAD(P)H-quinone oxidoreductase subunit M from Prochlorococcus marinus (strain NATL1A).